Consider the following 196-residue polypeptide: Putative 3-methyladenine DNA glycosylase (196 aa).

Belongs to the DNA glycosylase MPG family.

The polypeptide is Putative 3-methyladenine DNA glycosylase (Chlorobium phaeovibrioides (strain DSM 265 / 1930) (Prosthecochloris vibrioformis (strain DSM 265))).